Here is a 299-residue protein sequence, read N- to C-terminus: B-box zinc finger protein 22 (299 aa).

Positions 5, 8, 28, 33, 57, 60, 80, and 85 each coordinate Zn(2+). Residues 5–47 form a B box-type 1; atypical zinc finger; that stretch reads CNVCEAAEATVLCCADEAALCWACDEKIHAANKLAGKHQRVPL. The segment at 57–99 adopts a B box-type 2; atypical zinc-finger fold; sequence CDICQEASGFFFCLQDRALLCRKCDVAIHTVNPHVSAHQRFLL. Disordered regions lie at residues 143–181 and 206–299; these read FDHHHHQQQQEQQEGVIPGTKVNDQTSTKLPLVSSGSTT and ENNG…RRRF. Composition is skewed to polar residues over residues 164-181, 251-260, and 277-290; these read VNDQTSTKLPLVSSGSTT, QIQSPPTASG, and ITSSTPYTGSSPNQ.

In terms of assembly, interacts with HY5. In terms of processing, ubiquitinated by COP1 in vitro. COP1-mediated degradation of BBX22 by the proteasome occurs in the dark and is important for a precise skotomorphogenesis process and optimization of seedling growth under short days conditions.

The protein localises to the nucleus. Acts as a positive regulator of seedling photomorphogenesis and light-regulated inhibition of hypocotyl elongation, independently and in concert with HY5 and BBX21. Acts as a positive regulator of de-etiolation and influences chloroplast biogenesis and function through regulation of genes encoding chloroplast proteins. Acts downstream of COP1 and plays an important role in early and long-term adjustment of the shade avoidance syndrome (SAS) responses in natural environments. Regulates the expression of genes responsive to light hormone signals which may contribute to optimal seedling development. In Arabidopsis thaliana (Mouse-ear cress), this protein is B-box zinc finger protein 22.